Reading from the N-terminus, the 132-residue chain is MGLGIDILKISRISRLIQRSPEWEKNFLKKCLCENEIKKYNLIKSNSSLPRLSEQAKWLAVRWCVKEAVFKALQPNFRVYMSMMEYVRTPTGYPSVVIHDPRFPLSPVMVSVSHEEDLVVANALYLPSMPKT.

Positions 6 and 67 each coordinate Mg(2+).

Belongs to the P-Pant transferase superfamily. AcpS family.

It carries out the reaction apo-[ACP] + CoA = holo-[ACP] + adenosine 3',5'-bisphosphate + H(+). Transfers the 4'-phosphopantetheine moiety from coenzyme A to a Ser of acyl-carrier-protein. This is Putative holo-[acyl-carrier-protein] synthase (new8) from Schizosaccharomyces pombe (strain 972 / ATCC 24843) (Fission yeast).